Reading from the N-terminus, the 312-residue chain is Regulation of nuclear pre-mRNA domain-containing protein 1A (312 aa).

Serine 2 carries the post-translational modification N-acetylserine. The 132-residue stretch at 2-133 folds into the CID domain; it reads SAFSEAALEK…QLKQALYGDK (132 aa). Phosphoserine occurs at positions 153, 156, and 285. Residues 244–286 adopt a coiled-coil conformation; the sequence is LADFLRCQKEALAEKEHKLEEYKRKLARVSLVRKELRSRIQSL.

Belongs to the UPF0400 (RTT103) family. As to quaternary structure, may form a heterodimer with RPRD1B. Associates with the RNA polymerase II subunit POLR2A (via CTD phosphorylated at 'Ser-2' and 'Ser-7' of the heptad repeats).

It localises to the nucleus. Interacts with phosphorylated C-terminal heptapeptide repeat domain (CTD) of the largest RNA polymerase II subunit POLR2A, and participates in dephosphorylation of the CTD by RPAP2. May act as a negative regulator of cyclin-D1 (CCND1) and cyclin-E (CCNE1) in the cell cycle. This is Regulation of nuclear pre-mRNA domain-containing protein 1A (RPRD1A) from Pongo abelii (Sumatran orangutan).